We begin with the raw amino-acid sequence, 15639 residues long: MASEHTSDGLRKLLLDLALEVLEIEPTRFRPEKSFLELGGDSLSAIEFMAKCRANDIDVDVGIILRAKNVADLVDKIIEQQLEEEEEDDDSLDNESERDHSQKDLMPSHLLELSDALLEKVIKPTNVEADLRAAIHCISPCLSMQEGCLISHAIDPEAYQCRFVLKITSTNPTNLFNAENLAEAWRRVVARHPSLRTSFMESQNRPGKFDQIIWKSVRPQISICQDVSQVVAPTTPPKLDYSQPPHHLVLAQGSAADLYVRLDISHAIVDGQSTEVLLHDLWQAYQGRLPQGEAIAVTDILKLHNSSTAADAAAYWSDYLSKAQESYLPMKVNQAASTNLSSIKRTIKVAQDDLEAFCAKRGVTIANLCQMAWGLVLRSFTNSDKVCFSYVTSGRQVPLVGINEAVGAFITTLIQRLDFNRSKDIAEVLTQVNDDFIQSVPYQHLSFNDIGLKSARQWGNSILSMHRPLPTQVYANSGIGFEPITRTTATDYDVSLNIDIFTDSIVLNMDFWLSKMSEEDAHSTLKVYEKAILFVLNNSDKMTRDFLPLTEDDRATIHARNQKIPSKVDKCVHDLVLETISKQPDAVAVQAWDGQWTYSELNEKATRVAEFLISLGTGPEVKVGLCMEKSRWAPIAMLGILKAGGVVVPMGTQHPLSRVQTVLEDTKAIAILTDKEQETRLGGLKVRKITIDAEIMSNANGSILANSTKVSPDNAAWIVYTSGSTGTPKGVVLEHAALCSSITGHSAAFQLDNKTRTLQFAAHTFDAAIQDVFTTIFVGGVICIPSEHDRMNALERVMDELKVNFATLTSTVAGLLRPQAIPSMETIVLVGEAVKPAVVEAWLPHSRVLNAYGPSECSIHSTCSKPITDKRDALVIGFPLTDCLWVTDPDNYNRLSPIGASGELLIEGPILARGYLNDLEKTGKAFVVDPDFVHELGLPKGRRMYRTGDLVRQNSDGSLTYLGRRDTQVKIHGQRVEIGEIEYHITRHSSVEEAVVVKVSGGPMDGRLVGAIVLKNFVSGTYHGTSVKEIDMGQHASAMLQVSDVQLHLSERVMQYMVPTFWIPVNSLPVNASGKIDRKVVGTWMADLDMDTVERLSGTGEEEEKEQTPATAIEKELRRIWSETLNIPLRNISYRNSFLSLGGDSITAMQVVSICRSVDISVSVKQVLECRALSELALVARSTTESVDDLSVVPDGEFTLAPIQQQYFDLVAADGLEARSSNRFNQSVHLSVRRPIGVAELARSMEAVVAKHAMLRARFVPDTGSGWSQRIENQLVGSYRLKVSQVESMEQVQSTIYDAQDSLDLQNGPVFSADLISIKDQQLVSMTAHHLVVDLVSWRIIVRDLEQLLSDRTLQNTRSLSFPTWLQLQRDHTEEKISESTAALPFDVSPADLKYWNLQPGTLTVKDRIIEMIEVDELTTSLLFGAANNAMRSEPVEILLAALFHSFANTFIDRPVPAIFNEGHGREPWSDELDLADTVGWFTTMTPLQVTNTTGDIVDTLKQTKERRRRIPEKGMTAFAAQYFSGKSESQVMEILFNYEGRYQQLENEDGLFRLAQPSDLGDADQSLSVGQDVKIQAAIDINASVSSKKLQLRIGFSKQSRRQDDMKQWMVACGETITHLVKRLAHMAPMMTAGDFTTATLTEDDVMFLEQTYLPEIGLNIPTDVEDVLPCTPIQQGILFSQENSKSTYKVRQLVEVLPRDASRPVSVDQLVKAWRTVIRQHSIMRTIFVDSLPNQQRFHQVVLKEVDAVADIHILQNTQNRSLHDILAEQPEFDYRGKERPPHRFTIITDISGKTFAHFEISHALVDASSIELLVSDLFAAYGGMPSGKASHYGEYVAFLESKPITDDLIYWKSLLEGAEPCKLPLASIDNATTTGSFTTRKHVGRQLTDLEELQTFRKEHEITIATLFQLAWSLVLKSRTGSSKVSFGYLSSGRDVPIRDVEGLVGPMVNLMICHNHLDQDESVIAAARKIQTKFLDSFAHQRVPLDAIQHSLQLSGQALFNTTLSYKNSAASDSNAASSISFNRLEAEDPTEYDINIDITAGKTDIAVTLQYSPETLAQSSADELLQQLVEIVQMLCHNTETSLGNLSLLTNNDVTSIKAWNAGPFLSDDRLLHHLIQEAAKEYTNASAICAWDGEVTHDELNALTDRLAHHLRLELGVGPEKTVGVCMDKSKWAVVSMLAILKAGGAVLPLGVQLPVARIEFLLRDASAVAVLANQQHATRLRDVAPKALVIDEQLFSEIPELTGPACTDVKADSAAWVIYTSGSTGMPKGVVLQHSALSTSLLAQGPALGITKGTRTLQFAAYTFDVSIGETFATLIRGGTVCIPSEDRRVNNLAGTAADMRVNLAILTSTVAGLLEPAEVPLLSTIVLAGEAASPAVVDKWLGHAAVYNAYGPAECSVLASSSKPMARKEDAPVIGYPLSGCFWVADPTDYNSLVPIGVIGELLVEGPQLAREYLGDEERTKTSFIQDPEFVTKLNLGHGHRMYRTGDLVQQNLDGSLIYIGRRDNQIKIRGQRVEVGEIEYLVTSHPAVKDAVVILADKGLLKNKLIGVIATHDSIKDGGYGSSVEIADEHHRQTASPYTAEIRRLLSQNIPAYMIPTLWVILATIPINSSGKVDRAQIKQSLFTMDPKALGLVLASNTQDKLRTVPATALEKQLLTAWSKTLNLVPEQIGYGQAFTAVGGDSVTAMQVVSELRKVGVTFSVRDVLQSQNIAELALKAKSTTAHQAEETPYEPFALSPVQQMFFDDIAADGLVSAGEHRYNQGFWLSVERPTGVDELARAIEILVGRHAMLRARFFHDGEHGWKQRIQEELQGSYRFRAMQVESDDDLAAISNASQKSLDLEHGPVFSVDVVNRESQGQMMYVVAHHLVVDLVSWRIILRELEELLRNRTMSEQVPLSFRSWNHLQSQYSQGLSDVSATLPYSVPSADWSYWGLEQGYKAGDQIQKSVVLEEAITNKLFGDSNRALRTEPVEILLAALFYSFQATFDNRPVPAIFNEGHGRETWDESVDLSETVGWFTIMTPLACAEEHSDIVDLLAQTKDQRRRIPSRGLPYFTSRFLTEEGKRSFVDHRQMEILFNYQGRYQQTESKDALFRPIDLSNLTTKASAPAVGSLVKQTAVFDIDVSRAVDSTHVAFRFSQHISRQDDIARWMLKFQMSVTELLHRLEQMEIRVTSSDFPLTQLTRKDLMALQQTSSSLPGLSSLDNIQDIYPCSPTQQGILISQSKNPEGYQIRQFIKISGMGGKPVDIAVIKCAWQRVINRHSILRTIFIDWLPSQLSYHQLVLKGWTADVPIIACQDESAIKTHIKGLAELKYGDNKLPHEFTLYQTETGEVYGFFQMSHTIVDAWSIDLIVRDLVAACDREAKFMPAPRYGDYISYLKEDTSDKDIKYWTKLLGNVEPCHLQIEGQDSKSENESAFEIKSSIEDLTAFRGLQEKQGITSASLLRFAWAVVLSAYTNSSQVDFGFLTHGRDVPVSGIENLAGPTINMSVCHLRIDSGSASLDGIKKSQDLFLEGLEHQRSSLADIQHHLKLSNQALFNTTMSYRQATSADALKSSSIVIESVYAENPTEFDINVNIVAAQDRIDVELHYKLSAVSHTAAQRLLETLVHVADQLARQTVAKLDDLIMMSPEDLNKIRTRNALVPSRLHSFVHELVAEKTFTQPHAPAVAAWDGDMTYQALDAVSQTLAGYLASLGVGPETMVGVCMGKSKWAVVSMLAILKAGGTVVPLGVNAPLSRIEHIVRDTAATIVLVDVAQADRLATIASNIIDVNDDLIDNLPACSTPPCAAISPDNAAYVIFTSGSTGTPKGVILEHGALCTSLRAHGKAFSLDAHSRVLQFAAHTFDAAIQDIFTTLAFGGCVCIVSEDERMNNLAAGMRRTGVNFAALTSSVAALIHPDDTPDLKTIILVGEAVSEVVVKRWIQSSRLINAYGPAEGSICTTCTAPMRSDFEASNIGYPVAGCVWVTDPADYNRLCPPGVPGELLIEGPLLARGYLNDAEKTAAAFVREPKFLKQIGISNRTGRLYRTGDLVRQNPDGSLTFMGRIDSQIKIAGQRVETGEIENQIARLLPTVRQVSVDLIQDPSRSGARTLVAAIEIHTNDTKPSQQSLEPVKYSRGLHKQIEALQDSLAEVLPSYMVPKIFVPLVTLPVGATGKLDRRALKQYLESLDNSELRAFVANEAVKEPPSNDAERMVQSLWAKIFKRPTSAIGINDHFFHLGGDSVLAMQMIAAAHEEAMDLTVADIFRMPRLHQLAAIVTQRGFKAESSESMNPAPFNLAQHLLSSVSEERDRQFAELAEQCSIGVEDIEDVYPCTPLQENLIASTLHNAEAYIARRVFRLRPEVATDRFMSTWTQLSEMQPILRTRILFTTLLQPVQVVVRKSVSWNTAESLQQYLDTDRKQPIGEGEALCRLALIDEGDRYFVWTMHHSIYDGWSTSKMLEVLSNLLEEKPVSPAVPFSRFVKYVAVQDAETTQNFWRQQLDGVVSATRFPALPSASYKPRPTKKASLTLTATRQPGQVTTSIALRAAWAKLVATYTNTDDLVIIEALSGRNAPVSGILDILAPTVTTVPVRVRLQPQQTIRKVLADLQQQSADMIPFEQTGLQNIKRIAPGAGSDLGSEHLFVVQTALEQASKDNTGPFDRVLDADVPLDYALLMECTMDLTRDTVDVQASFDEAVMSADQIEMMLFHFQQIFEQILAHGTGLEEETEKGETMGGIDLLSKQDMDLIGSWNAKPYQALDACLPAQVTEAASTRPDAQAVCAWDGAMTYAELEQQAGRLAHYLSGRNVGPEIKVGVCMAKSKWAVVSMLAVLKAGGVVVPLGADHPLLRIQHMIRDTGMDLILVDSAQAERLASTGPDLVIVSEVFVDSSLGQETFSRESINPESAAWIVYTSGSTGTPKGVVLTHKSLCTSIKAHGTAYGTSSGTRMLQFAAHTFDAAIQEVFTTLIFGGCVCIPSGDDRVNDLIRVICDMDVSLAALTPSVAGMILPSSVPSLKTLILIGEAVTSAVLSKWIGAITVFNGYGPTECSIYTTCKRMESVKDLGNIGSPLGGRVWVTNVTNYHQLCPVGAPGELLVEGPILAREYLNDTPRSSASFVENPGFVKRFGLEGQRMYRTGDLVRQNLDGSITILGRLDTQAKLRGQRLEATEIENHIIQSQSGIQSSVVSIVQLEGATTEPVLVAAIEFSSGSEFTKQEKQNDGLIESSDVLRAWFQKTQESLYQTLPAYMVPKIYIAMERLPLNTSGKLDRPKVRQLIESLHSDTLASYSSAGSNTVEPATIMERQLQKLWASVLNKPQASVGADDHFFQIGGDSVVAMRLVASARQEQIHLSVAQIFKHPRLCDLASHIDHHTLLEETGDLAPFALWLGEDQAESRSSAMQKLASQCDVAVEQIEDIYPCTPLQEGMMALTMQNPRAYVFQSVFRLDDTLQSERLVAAWDKLVDIVPILRTRIVALADSRSLQCVIREPVQWKKSNSLKDYLRQDSQDIIKSGSRMSRCALIEGEKSERYFVWTAHHGLYDGWSRMRMMELLSKIYNSETLPTLPPMSRFLSYLGGSSQADMKTFWQNQLANLAVAKFPALPHATYQPNVDCIAKRQLIGQPANSSVTTSVALRAAWAITVATYTSSEEALLAVALSGRTAPVEGILDLLAPTITTVPVRIRIPHSRTVRELLEEVQKQATDMIPYEHAGLQNMPQLVDDSSVLASLGHLFIVQSTLDGVSVRGHVAPEKTLGLHAEEANFTGLDSYALNVECTMLNEDKIHVDARFDKNVVSEKQVERVLDSFATVFAQLCDSSAAETLVQDVVVIGEKDAQAIRAENAVVTPTHERCIHDLVMDSTLKYPNEPAVHAWDGGFTYQQLDAAATRLALYLSQQGVGPEVKVGFCMDKSKWAVVSILAILKAGGAVTPLGVQHPLPHIEKILSSTKATIILADAQQASRLSGLAAKSVVVDGKLLESLPGSVSGQTVCKVVTPDNTAWVIHTSGSTGTPKGVLLHHSQLSTSFKHQTVAFGIGQDTRTFQFSAFTFDVSISDVCLTLYVGGCVCLPSESDRMNDLEKTARDMEVNLLMITSTVAGLIQPTNVPSAKTLVLTGEAIAPNVVTQWLGHATILNAYGPAECSVDSCSVAFTSPAMASNIGYTTAACFWVVDQLNPHRLVPVGTIGELLIEGPLVSHGYLNDPEKTSQSQMVGPAFFKQLGLEQSRGRIYRTGDLVRQNADGSYEYLGRRDSQMKVHGQRVEAAMIEELIVRLLPDAHVSLVDLVLFGDGKADSTLVASIEFKTDSIYQQHVTSSGLLAATDELREALYHVRTSLADSIPIYMVPSVFVPFARLPTNMSGKLDRKALQQIYKTLGQEELDLYAPQAGEAAGAQPSTTAEIKLQALWATVLRKPSAQYSTRDHFFQSGGDSVSAMRLVAAARQEGLQLAVTDIFNNPRLEDMAKIVEEHVEEEELVDVAPFSLWEADIPTPEQRKSELADLAAQCKVATDNIEDVYPATPLQEGMMAITMQSPRAYVSQVVYRLDKEMDLDRLIRTWQRAEQIAPILRTRIVARPEAASVQVVIREQSEWSFGNDLEAYLAQDKKSPVTFGGPLSRFALITSKQKSERYFVWTCHHSLYDGWSRNRIMDAVARAYTGEEVGPSTPVTRFLQHLGNAGEAETSKFWNTQLDGLTATKFPALPHSGYQPYVKSVVSQRVRDTSINGVVTTSVLLRAAWAIVVAAQTGNKDVLLTVSLSGRTVPVPGILDMLAPTLTTVPVRLRVEREQTIAAFLREAQKQATDMMPFEHTGLQGIRRLLPKNAAPLDPGHLFVVQTSLDKDDGSGSDTFGLTPMDPEIDGFDSYALNISCTVLEDEQQVEIEARFDEQVLSQGRTTALLERFAKVYQQLSHLATANAGAGACVGDISTLCQSDIAQLKDWSARASYDKAEHCLHTLVHEATIKYATSTAIEAWDGSMTYAELESAADRLAQHLASLDVGPETMVGMCMDKSKFAAVAFFAILKAGGVCVPLGVQHPVSRVEHIVQDAGATVLLVDKQQAERLNDMESDAKVITVEEDFLSRLPQSNGFVCHNVTPDNAAWIIYTSGSTGTPKGVVLQHSAIVSAMLGHNAAFGLNSKSRVLQFAAHTFDLLISEIFSTLLCGGTICIPSEETRVSNLAQTAKAMGVNFTWLTSTVASMLTPQELPDLKTLILIGEAASAAVVETWLGHATVLNAYGPSECSIHSSCSKSMVKKEDTPVIGFPVCGNFWVVDAEDYHRLAPVGGVGELLIQGPHLAREYLKDEAKTAAAFVNNARWASELGITHSTQKMYRTGDLVQQNPDGSLTYLGRRDTQIKIRGQRVEVGEIEHHITQHPAVWHAAIVRPSTGPLAGRLAAVVVLHHSAAGNGYSSDVLPLEAELQMANAVTQEVQSFLTERVMQYMVPSTWIPVAALPMNLNRKTDLGRLTRWVAELDEKALTAYQTEAEDDELVSARGTAMEEQLRTVFSRILNVSESRTRLDRSFLSLGGDSVTAMQVVAQCRRLGIQLSVRDVIQSKSISQLALLASTDESEVAHDAVSYEPFALAPIQQMFFDQVASDGMNVMGENRYNQSVCVRLNQAIELSSLQAALDAVVDKHAMLRARFQVDKQSWTQRILETVQGSYRFQTVTAGSEDEIFDILETAESALDIENGPVFSVTVINAPGRQLVFLVAHHLVIDLMSWRIILTDLAELLQNGGQDGKYTLDRSLSFPQWSRLQAEYSHTIKSLDSVLPFDVPAADWAYWGLSAGDFVTRDKIHEHVEISKQITELLLGEGANSALKTEPVELLLAALFQSFHKTFPNRLVPAIVNEGHGREPWDSSVDLSETVGWFTTMTPLHVPVDSQSYDVVETLKQTKERRRQTPGRGLPYFTARYLTKEGRTKFADHQMMEILFNYQGQYQQLERDDTLFSLETLGGRGQPSRVGQNVRELAVFDVAVTVSQGPLHVSIGFSKNIRRPKAVQDWLTAYSKTLEELTTQLVSLAPTRTSSDFPLASLSQQDIDAIATENLSSTGLGFNDVEDVFPASPMQQGILLSMSKNPGTYYVQQTCEFIPKADVKYDTARLASAWQLVVDRHAILRTFFTDALPDQHAYHQIVLSAWTADVQIVKCAHQTEVQSQIGARAQQAFAADQPPHRFTVYEVGDESLYGHFEISHALVDASSVQLLVHDLLRAYDGSLPAAQGPRYSSYISYLQERSPEEDLKYWTSVLGDVEPCQVKTVTFGPAQPIDERPQNIAAEIENLEILQRFGEAHGVTLATLFQLAWAMVLGRHTGLQQVCFGYLLNGRDVPVAGIEEMVGPMINMMVCAVSLDNKELAVPEAAQLVQKQFLEGFEHQRTSLGDIQHAFKLSGQALFNSVLNYKAAQSTDGAQTTSLSIAGKGSEDPTEYDISVNVTKTTDRISLSLQYAQAEVSPALAQRLLDGLLQAVHTLAGSDASQRMRNISLASVKDVAKFREWNTHTPPRVESTVHALVQKSVHARPDATAICAWDGEMSYGELDAAASRLASRLVDDHGIGPEAKVGLCMDKSKWVVVAMLAILKAGGAVLPLGVQHPLERIAHIVRETEAKVVLVDEGQEKRLAEMDVSTLVVDEALVAGVSDALDSKTQTSSPDNTAWIIYTSGSTGTPKGVVLQHGALATSLLAHSKAFGMGVHTRSLQFAAHTFDASIQDTMTTLTIGGCICIPSETERMNSLSAAVARMGANCANLTTTVVGLLHPSEVPSLKTIIFGGEAVLPSLVDLWAPHATLINSLGHTECSINSSFSQPMTHGWQAPGIGKAICGSFWVADQVDFNQLVSIGSVGELLIESPQLAKEYLRDSAKTAAAFVTDPDFVHQLGFTKGRRMYRTGDLVRQLEDGTLTYVGRRDTQVKIRGQRVEIGEIESTVLAVLPEVRSVVVNLIKRGDSQQTLSVAVEFVAENTFLEGEVNTDTGLIAPSKELLEAFGLLRDRLTEVLPLYMVPSIFVPLVKLPLNASGKLDRRATQQLVESLDDATIAAYSSSAAKVQPATDAERQLQTLWAGVLDKDVNAIGATDHFFQLGGDSVVAMRLVAAARQENVQISVADIFAHPRLRDLAKTIQDSETADEEGDAAPFALWEESLDMANSQQRQQELIKLANECAVEVDQIEDVYPCTPLQEGFMALTMQNPRAYVFQSCFELDSKIGTDTLISAWEQLMDVVAILRTRIVALPDSQSLQCVVREKLPWTFSNKSLDDFLASDNQTPMTSGSRLCRCAIVEEPQDNKRYFVWTVHHGVYDGYSRSRMLELLTKILTGHSLPPLTPIPRFLQYLARVDDDEAAAGRFWKAQLANVAAPKFPALPHAAYQPRVDSTARMQIAGPRLAASSGVTTAVAIRTAWAIAVGAHTNSDEALLVVALSGRAAPVDGILDLLGPTLTTVPFRVRIDREKTLSELLTQVQSQASDMIPFEHTGLQKVQVLAGSGPLELGHLLTVQSTLSDERDDPVEALGMHAREVSNLGSDSYALNVECSIWNVENKINVEARFDGNVISQDQVEAILDGFAAIFRQLCDENIAARTKVSEVSVIGEKGLELLRARTDKMPAPYEVLVQNMVTNSLIKNPHAIAVNAWDGDLTYQQLDDAASCLAHHLVRSFGIKPEDKVAFCMDKSKRAVISMLAILKAGGAVTPLGVTHPLQHVQRVINNASSPLVLVDKKQAERFAELSVPTITIDDELLDNLPAYSGPACSSLTVNNTAWVIHTSGSTGIPKGVLLHHSLIATSAKYQAILYGCVGPHTRTLQFAAHTFDMNIFEVFLTLYGGGTICILSEEDRMNDLERQANAMKVTLAFLTSTVAGLLDPTKLPSLHTIVLTGEACTPSVVQQWLDHAVVLNAYGPAEGSVASITKAYTHAEEYSNIGFETAGCFWVVDQLNSDRLVPLGTIGELIIEGPLVSPGYLNDAEKTAQMFIVDPAWVTDLGPTRGRRMYKTGDLVRQNQDGSFEYLGRRDNQMKIRGQRVEAAEVESAIVRLLSGVRTAAVDLVKVGNDADKQVTLVGAFEFVPGTEFTTQGEAEGGLLAPSQPLREALQTLRKDLLQGLPPYMVPSIFVPLVRLPQNLSGKLDRRALRQMLEGLDGTQLTSYASEDSERIEPATPMEMQLAKLWATVLRKPVESVSASDDFFQSGGDSVAAMRLVAAGRQEDVDFTVADIFREPRLSGLAALIQKQIDEEEEYDDSEEEEEDDEEEVREVKGDVAPFALWKEEDGAIADLAAQCGVAISEVEDVYPCTPLQEGLMAITMQSPHAYVSQAVFKLGQDLDIARFKAAWQKTTEKVSILRTRILACRDSASLQVVLRQPIEWKSSGKTLHAYLADDKDTPMTLGAPLCRLAIVENNNERHFVWTCHHSLYDGWSRHRTMDLVSRIYAGSEVGSITPMARFVNHLVKVREVDDTRQYWNAQLRGVTATKFPALPNATYQPLVSTVLRQKMSFTPLPGTITTAVMLRVAWAMVCAAQTSNSDVLLAVSMSGRTIPVPGILDMLGPTLTTVPVRISIDRDEGLHTFLKAAQRQATEMMPYEHTGLQAIRRLLPDGGAKVDLDAGHVFIVQTSLDKTADSVTRPFGSALEPIDINQHGFDSYALNVSCTANDDEQEVEVEVRFDNKVISEYQMQSVLDRLATVLQQIGHLGQAAKVADLQVLSETDKTKIKAWNGICPPRIESCVHMLTHKQAIERPNAPAICAWDGDMTQRELDAAADRLAGHLASLGVGPEVKVGMCINKSKWAVVCMLAILKAGGAVLPLGVQHPIPRIQHILRDTAADVILVDEEQVERLGSLGSETRLVTVDERLVSSLPQPAAPVCSTVGPENAAWVIYTSGSTGVPKGVVLQHFALCTSLVAHGTAFGMGSDTRSLQFAAYTFDASIQDTMTTLVNGGGCICIPSEDERMNSLAAAIRRMKVNCATLTSTVAGLLDPTEIPLLKTIAFGGEAVGPAVVERWGKYANLLNSYGATECSINSSCSKPMTEAHHAANIGWAIPNSGVFWVVDSVDFNRLAPIGAVGELLIEGPQLAREYLNDPVKTASSFVVDPSFIAQLNLGSGRRMYRTGDLVQQQEDGSLIYLGRRDTQIKIRGQRVETGEIESAVRRFLPDVRAAVVNLVQRGGDNALRVLTLAVEFIAESSFQTGETSSTDLLAPSQALREAFADLRDKLLEILPPYMVPSIFVPFVKLPVNTSGKTDRRAVKELIEALTEDALAAYTTTSLTKTEPATGMERHLQALWASVLNKPIESVGANDHFFQSGGDSVVAMRLVAAARQKDIHLTVKDIFSFPRLSDLARETESQGAAEEEDVAPFALWEQSGSNAIDEIARLCAVSSDGIEDVYPCTPLQEGLMAITLQHTNAYVSQRVFKLDASIDVAQFKNRWDSLVELLPILRTRIVPASLSSSLQVVVREAVQWQTASSVEEYLRRDQNTPMTHGGALCRLALITEQDGTNTFVWTIHHSIYDGWSVIKMMGMLDGLSREQTLPEVVPVSRFVKYLTQQDPAASESFWKQQLEGANLTPFPALADTTYKPRPTNRVRFQFSKLKRHGSVVAPAILRAAWAITVATYSGTDDVTLTVALSGRNAPVPGITDIVAPTVTSVPVRIAIQQDQPVAAYLSAIQQQAVDMIPFEHTGLQNIKRIALPAGASFGSGHLFIVQASVDNDRAAATQFSGMTEQFSDQDINMDYPLIVECTTDPEQAMVEVSVSFDNAVLSPDMVDGMMHGFETIFQQLSSVNEQDGTDNSVKISDVQLLGRKDSEMIQSWNKTLVPRATDCLHHTFKRTADKQPERPAICAWDGNFTFHELNQTADRLAAHLIARGVGAEVMVGVCMNKSKWAVVGMLAILKAGGVVVPLGVQHPLARIEHIVKDADIRVVLVDSQQGQRLGDNLAEKIVVDDALLTSLPNPASVKDVRVTADSAAWVIYTSGSTGTPKGVVLEHGSLATSIQAQAAAFGITPETRALQFSAYTFDISIQDMFATLLHGGCVCIPSEEARVVGLAGAIPELKVNSAALTSTVTALLDPAEVPDLKTICFVGEAVNQSVMDKWVHHCSLINAYGPAEASICTTFNQIKKGDAASTIGTPLAGRVWVVDPTNFNRLVPVGAPGELLIEGPLLARHYLNDPIKTEKAFVQAPSFTPHFGISAGTRMYRTGDLVRQNAIGSLTYIGRRDTQIKVRGQRVEIGEIESLVKRLLPSAHTAVVDLITRKEGSEALTVAIEFAAGQPASVANPSGSPLSSPTTALREELSNLRAALFEALPSYMVPSVFVPVVKLPVNASGKLDRGAVRRLLQDLDDEQLGAYVSAEAERKEPSTEMERRIQQLWSAVLKKPATAIGANDHFFQSGGDSVSAIRMIASARGMDVHLTVADVFKHPRLSDLAAAVQGRITDEDEEDPAPFTLWQESSVDDIAEHKAKMHDLASQCDLTAEQIEDVYPATPLQEGLMAITMHSPEAYVSQAVFRLEDNIQVDQLIAAWESLVQMAPILRTRIVSQPGQSSLQIVVKERTSWIRQTSLNIYLAEDKKLPIVSGGELSRTAVVEDKSKRYFVWTCHHSIYDGWSRRKMMDLLARIYNDEVVEGLTPIPRFIRYLTQVSRQDTETFWRAQLEGVAVSKFPTLPHPTYQPRTSSMVRKTFSNASSANVATMSAVLRAAWTLVVNAHTGTDDVLLAVSLSGRTLPVPGILDLIAPTLTTVPVRNKIDRNQSITSFLEQVQSQATAMMPFEHSGLQQIRRMLPGSGTDLDPGHLFMVQTNLDQEDVGAVSDIGLRFEETGVEGFDSYALNILCTTSDGAHGTEVEARFDDKVISHARVEALLNRFDHVFAQLVTETTASQKRIQDIEMVSEQDVAQMRSWNTAASLQPVGMCVHDLIRDSFSSRADEIAICACDGDLTYGELDDASTRLAQYLVSLGVKPEVKVGMSMDKSKWGPIAMLAILKAGGVVVPLNVAHPVMRIEGIVKDTEMTIAVLDAGQADRIGHLVSNAVVLDAAFLDSLPQVNSRFSTTVTPENAAWIIYTSGSTGTPKGVVLQHSALSTSLKAHGAAFGMNSSTRTLQFAANSFDATISEFFATLLYGGTVCIPSEDDRMSDLTNICNSMKVTLAMLTSTVAALLGDIPTLKTLILVGEAASPAVVEQWLSRATILNAYGPSECSIHASCSKPMAAKEDTPIIGYALSGCFWVVDPTDHNRLAPLGGTGELLIEGPQLAREYLNDSAKTSSAFVVDPAFITKLGLGTGRRMYRTGDLVQQREDGSLVYLGRRDTQIKIRGQRVETGEIEHHIAQHSAVLRGAIVRPKTGPLAERLVAFVVLNELAVGSGYSSEVLEISAEDRTHANEVATGVKKYLSDRVMQYMVPGVWITLAALPMNINSKTDLLTLTRWAAEVDDETVATYTNEDTQTASMPGTVQEEQLRSIFSLVLNIPEVRIPLDRSFLSLGGDSVTAMQVISQCRKQGITLTVRDVIQSQSIQQLGQKVKEAVDDNEELNKVSYKPFGLAPIQQMFFEQIVPKQGSGDGENRYNQSVFLKLQQRYALEVIRRAVDAIVDKHAMLRSRFERTADGLWTQRVAQKLDASYSFHNQSVESEDEIYAILDTAEKSLNIENGPVFATRIIDTSDKQLLFLVAHHLVIDLMSWRIILNDFAEALQGRSLAASRSVSFEAWAKAQNEYSKTLQIEKVLPYTVPMADWNYWGVPIGSYLPADKVYQTIDVDEKTAALILGDSNTALQTEPVEILLAALFHSFRRTFLDREVPAIVNEGHGREPWDDSIDLSETVGWFTTMTPLHVAVEKDDLIKTLRGTKEHRRQTPGRGLPYFTSRYMTEQGREAFAHHRAIEVLFNYQGRYQQLERQDAVFSLESLARGVPSPVGANVPELALFDVSVTALASTMQISIGYSRNIRDSALVHEWATNYGNTLKDMTSTLLQMAPTRTPSDFPLATLTDADLSTIEKKNLVPASLVYANVEDILPCSPIQQGILLGQVKAPSTYHIQQTCRFRPKSKHTLETDVKRLSRAWQRVVQRHSILRTFFVDSLASHDSFHQVVLSSWSADVTVVNCTTADEAKAYFATHNPFAANQPPHRFTLVCVGGSDLYGHFEISHALVDASSIELIVNDLLQAYDDKLTVAPGPRYSSYVAHLQKSSAEADLGYWTALLQDAQPCHVRDAPKDLQNVDNTLNKLTSQMTDVATLQRFSEINGVTLATVFQLGWAMVLSSYTNLPQVCFGYLTNGRDVPLAQVDEMVGPMINMMVCTIKLDGETAVSEAAKHAQQSFLEGFDHQRTSLAAIHHALHLSGQPLFNSALSYKREQTVSGQQKPASLALESVASEDPTEYDVSLDVNWSEHSIGLSLVHTRQLSSGLAKSLLDSLVHVVTQLVRGDRTSKLRDISIVGEHDLQQIKAWNTIVPSRMDATLHTLVRDAAHRTPDALAVHAWDGDYTHVELDSTVQRLATRLRALGVRPETRVAFCMDKSRFAPVAVLAILNAGGAVVPLGVQHPVDRVNKIVLDAEAQVMLVDATQAARLVGVVPNMIVVDDKFLHNLPNVDSEQSQPTITPDNAAWVMYTSGSTGVPKGVVLPHGALATSLMVNGKSFGMGPHTRTLQFASYTFDDSIHDIIATLSFGGCICVPSETQRMNSLAEAITSMRANTAAITPTVASLLDPKAVPTLKTVLVGGEAATPQVIELWGPHATLLNLYGPTECSINACVSGPMTIAAHAASIGRPISGSGLVWVVDPANPNALVPLGAPGELLLEGPQLAREYLNDPAKTSAAFILDPAFLKLLGIEDTGRRMYRTGDLVIQRADGSLDYLGRGDGQIKIRGQRVETGDIEAAVRRLMPAARGAVVDLLARGEQRMLIAAVELVDGERADDGVLLAPSSEIREAFSSLKTALRNVLPPYMVPQSFVPLARLPVNASGKLDRRAVTTILSGLTSDVLASYTSDQGDSQLPASADEGALAGAWARVLGVEQSSITRNDDLFHLGGDSISAMKLVQAARELDLHLSVADIFRNPRLADMASVASAARTTQGEEQQYERFSLVETDKTALLAELPALLKVEESTIHDALPVTDFQALCVAGNTIGSGLEMNYFALDGQHAVDLAALKQGCKDLIQQTEMLRTVFVFHQEQMLQVVLAMSNPPVTLHETDEPLDTFTQQLIERQTSQPIRLGQPMASIDIVASPSSATHRIIFRLSHALYEGVALPMIFQRLSTLLAGQALTQGPSFGAFVADLQSRATQEAYSHWRSLLQGAQMPRLSSPPQEQRLFRMAPLPARSVPLPASVQKGITPAMLVKASWAAVLARHTRTPDVVFAETVSGRASASPDVADVLGCCAAILPVRATIRPDTTTAELLASVREQQILSAQNDALGARSIIRNCTEWEKGTRFTSRINHTLAEDGAVALGEEEYKLSPLPPREWMDVAEVSIASFQFGDRVEVGMSFADDELERGVVEGLLRELCDIMVRLASQQEGTVWDSEERSDSLLPSASAVNGTNGSNGDGTDAANGIGQKTGGTGGHAVEKSSGDAEVEKVSTNGHADNNTSAENRQSELSAAIKHATGTVLKNKLKTERSTEALWSGHADVVDYAHVAFLLQRQGWSVLTEDLVRCRSETELIDVVVKREAERVKGNGSAFNGANGHYSNEESVNGNGLHGVQTNGHAGKGVTNGVNGGSKGHI.

The Carrier 1 domain maps to His5–Gln81. Ser42 carries the post-translational modification O-(pantetheine 4'-phosphoryl)serine. A compositionally biased stretch (acidic residues) spans Leu82–Asn94. Residues Leu82–Leu105 form a disordered region. A condensation 1 region spans residues Pro140–Asp553. Residues Thr579–Ile971 are adenylation 1. Positions Thr1108–Thr1184 constitute a Carrier 2 domain. An O-(pantetheine 4'-phosphoryl)serine modification is found at Ser1145. The tract at residues Arg1219–Ala1626 is epimerase 1. The tract at residues Glu1667–Asn2097 is condensation 2. Residues Gln2122–Arg2518 form an adenylation 2 region. In terms of domain architecture, Carrier 3 spans Val2654–Thr2730. Ser2691 is subject to O-(pantetheine 4'-phosphoryl)serine. Positions Val2761 to Met3176 are epimerase 2. The tract at residues Gln3215 to Asp3640 is condensation 3. Residues Thr3669 to Ile4059 are adenylation 3. The Carrier 4 domain occupies Pro4193–Gly4269. Ser4230 is subject to O-(pantetheine 4'-phosphoryl)serine. Residues Glu4316–Glu4714 form a condensation 4 region. Positions Thr4756–Arg5149 are adenylation 4. Residues Glu5284–Thr5360 enclose the Carrier 5 domain. Ser5321 carries the post-translational modification O-(pantetheine 4'-phosphoryl)serine. The tract at residues Glu5402–Ser5802 is condensation 5. The adenylation 5 stretch occupies residues Lys5847 to Val6238. Positions Gln6375–Val6451 constitute a Carrier 6 domain. Ser6412 carries the post-translational modification O-(pantetheine 4'-phosphoryl)serine. Residues Glu6494–Ser6889 form a condensation 6 region. Positions Trp6952 to Arg7335 are adenylation 6. In terms of domain architecture, Carrier 7 spans Thr7473–Glu7546. Ser7507 is modified (O-(pantetheine 4'-phosphoryl)serine). An epimerase 3 region spans residues Met7580 to Gln7992. A condensation 7 region spans residues Glu8034 to Ser8459. Residues Gln8486–Arg8882 are adenylation 7. A Carrier 8 domain is found at Gln9015–Glu9091. An O-(pantetheine 4'-phosphoryl)serine modification is found at Ser9052. Residues Glu9136–Asp9535 are condensation 8. The interval Lys9583–Arg9974 is adenylation 8. The region spanning Glu10110–Ile10186 is the Carrier 9 domain. Residue Ser10147 is modified to O-(pantetheine 4'-phosphoryl)serine. Residues Ile10186–Glu10208 are disordered. Acidic residues predominate over residues Asp10187 to Val10206. The segment at Val10240–Ile10662 is condensation 9. The adenylation 9 stretch occupies residues Lys10683–Arg11082. The 77-residue stretch at Glu11217 to Gly11293 folds into the Carrier 10 domain. Ser11254 carries the post-translational modification O-(pantetheine 4'-phosphoryl)serine. The tract at residues Glu11329 to Val11725 is condensation 10. An adenylation 10 region spans residues Phe11770–Arg12165. One can recognise a Carrier 11 domain in the interval Glu12298–Ile12374. Ser12335 is subject to O-(pantetheine 4'-phosphoryl)serine. The tract at residues Glu12418–Gln12830 is condensation 11. The tract at residues Ser12861–Arg13249 is adenylation 11. A Carrier 12 domain is found at Met13383–Val13459. Ser13420 is modified (O-(pantetheine 4'-phosphoryl)serine). Positions Ala13476 to Gln13901 are epimerase 4. The condensation 12 stretch occupies residues Glu13940–Gln14369. Residues Arg14390 to Arg14789 are adenylation 12. Positions Leu14916–Arg14992 constitute a Carrier 13 domain. At Ser14953 the chain carries O-(pantetheine 4'-phosphoryl)serine. The segment at Gln15062–Gln15433 is condensation 13. 2 disordered regions span residues Glu15434–Gln15511 and Val15617–Ile15639. The span at Asn15455 to Gly15472 shows a compositional bias: low complexity. A compositionally biased stretch (basic and acidic residues) spans Ala15482–Lys15494. Positions Val15495–Gln15511 are enriched in polar residues.

It belongs to the NRP synthetase family.

Its pathway is antifungal biosynthesis. In terms of biological role, nonribosomal peptide synthetase; part of the gene cluster that mediates the biosynthesis of the antifungal antibiotic FR901469, an inhibitor of beta-1,3-glucansynthase, exerting antifungal activity against the pathogenes Candida albicans and Aspergillus fumigatus. FR901469 is a cyclic depsipeptide containing 12 amino acid residues and a fatty acid chain. The NRPS frbI contains 12 modules responsible for the formation of the depsipeptide backbone which is denoted as Acyl-Thr-Ala-Tyr-Val-4OHPro-Thr-Thr-3OHPro-threo3OHGln-Gly-Thr-Orn-OH (C71H116N14O23). The PKS frbB is probably involved in the production of the hydrocarbon chain, and the acyl-CoA ligase frbC might be involved in the transport of the chain to the peptide ptoduct of frbI. Because FR901469 contains 3 hydroxylated amino acid residues, the 3 oxygenases frbA, frbH, and frbJ might be participating in amino acid hydroxylation. As no thioesterase domains were detected in frbI or frbB, the thioesterases frbD and frbE may instead release and cyclize the products of the NRPS and PKS, respectively. The polypeptide is FR901469 synthetase (Dothideomycetidae sp. (strain 11243) (Fungal sp. (strain No.11243))).